A 264-amino-acid chain; its full sequence is Vitellin-degrading protease (264 aa).

Residues 1–15 (MTNSLLICFTILGLA) form the signal peptide. Positions 16-27 (ASSPTKPIGDIR) are cleaved as a propeptide — activation peptide. Residues 28 to 253 (IVGGEDIVIT…LREWVDENIT (226 aa)) enclose the Peptidase S1 domain. A disulfide bond links Cys-53 and Cys-69. Active-site charge relay system residues include His-68 and Asp-113. The cysteines at positions 178 and 194 are disulfide-linked. Asp-203 serves as a coordination point for substrate. An intrachain disulfide couples Cys-205 to Cys-229. The active-site Charge relay system is Ser-209. Asn-251 is a glycosylation site (N-linked (GlcNAc...) asparagine).

It belongs to the peptidase S1 family. Cleavage after Arg-27 leads to beta-VTN protease and subsequent cleavage after Arg-89 leads to alpha-VTN.

In terms of biological role, responsible for the degradation of vitellin in eggs at the head pigmentation stage. This Bombyx mori (Silk moth) protein is Vitellin-degrading protease.